Reading from the N-terminus, the 72-residue chain is Translation initiation factor IF-1 (72 aa).

The S1-like domain occupies 1–72 (MAKDDVIEID…DKGRITYRYK (72 aa)).

The protein belongs to the IF-1 family. As to quaternary structure, component of the 30S ribosomal translation pre-initiation complex which assembles on the 30S ribosome in the order IF-2 and IF-3, IF-1 and N-formylmethionyl-tRNA(fMet); mRNA recruitment can occur at any time during PIC assembly.

It localises to the cytoplasm. One of the essential components for the initiation of protein synthesis. Stabilizes the binding of IF-2 and IF-3 on the 30S subunit to which N-formylmethionyl-tRNA(fMet) subsequently binds. Helps modulate mRNA selection, yielding the 30S pre-initiation complex (PIC). Upon addition of the 50S ribosomal subunit IF-1, IF-2 and IF-3 are released leaving the mature 70S translation initiation complex. This Campylobacter curvus (strain 525.92) protein is Translation initiation factor IF-1.